We begin with the raw amino-acid sequence, 229 residues long: 2-phytyl-1,4-naphtoquinone methyltransferase (229 aa).

This sequence belongs to the class I-like SAM-binding methyltransferase superfamily. MenG/UbiE family.

It carries out the reaction demethylphylloquinol + S-adenosyl-L-methionine = phylloquinol + S-adenosyl-L-homocysteine + H(+). The protein operates within cofactor biosynthesis; phylloquinone biosynthesis. Methyltransferase required for the conversion of 2-phytyl-1,4-beta-naphthoquinol to phylloquinol. The sequence is that of 2-phytyl-1,4-naphtoquinone methyltransferase from Nostoc sp. (strain PCC 7120 / SAG 25.82 / UTEX 2576).